A 239-amino-acid polypeptide reads, in one-letter code: Ribonuclease PH (239 aa).

Phosphate is bound by residues Arg-87 and 125–127 (GTR).

The protein belongs to the RNase PH family. As to quaternary structure, homohexameric ring arranged as a trimer of dimers.

The enzyme catalyses tRNA(n+1) + phosphate = tRNA(n) + a ribonucleoside 5'-diphosphate. In terms of biological role, phosphorolytic 3'-5' exoribonuclease that plays an important role in tRNA 3'-end maturation. Removes nucleotide residues following the 3'-CCA terminus of tRNAs; can also add nucleotides to the ends of RNA molecules by using nucleoside diphosphates as substrates, but this may not be physiologically important. Probably plays a role in initiation of 16S rRNA degradation (leading to ribosome degradation) during starvation. In Acaryochloris marina (strain MBIC 11017), this protein is Ribonuclease PH.